The chain runs to 66 residues: Large ribosomal subunit protein bL35 (66 aa).

A disordered region spans residues 25 to 45 (QAAGKRHGMSKRPQKMKRNAR). Residues 28-44 (GKRHGMSKRPQKMKRNA) show a composition bias toward basic residues.

Belongs to the bacterial ribosomal protein bL35 family.

This Rhodospirillum centenum (strain ATCC 51521 / SW) protein is Large ribosomal subunit protein bL35.